Reading from the N-terminus, the 133-residue chain is Large ribosomal subunit protein bL20 (133 aa).

This sequence belongs to the bacterial ribosomal protein bL20 family.

Binds directly to 23S ribosomal RNA and is necessary for the in vitro assembly process of the 50S ribosomal subunit. It is not involved in the protein synthesizing functions of that subunit. This Mesorhizobium japonicum (strain LMG 29417 / CECT 9101 / MAFF 303099) (Mesorhizobium loti (strain MAFF 303099)) protein is Large ribosomal subunit protein bL20.